We begin with the raw amino-acid sequence, 780 residues long: Acetyl-CoA decarbonylase/synthase complex subunit alpha (780 aa).

[4Fe-4S] cluster is bound by residues Cys-73, Cys-76, Cys-77, Cys-79, Cys-84, and Cys-93. His-116 serves as a coordination point for CO. Positions 250, 278, and 317 each coordinate [Ni-4Fe-4S] cluster. 4Fe-4S ferredoxin-type domains follow at residues 399–429 (IDEI…MDAV) and 440–469 (LEEM…VSMV). The [4Fe-4S] cluster site is built by Cys-409, Cys-412, Cys-415, Cys-419, Cys-449, Cys-452, Cys-455, and Cys-459. [Ni-4Fe-4S] cluster contacts are provided by Cys-517, Cys-546, and Cys-581.

It belongs to the Ni-containing carbon monoxide dehydrogenase family. Heterotetramer of two alpha and two epsilon subunits. The ACDS complex is made up of alpha, epsilon, beta, gamma and delta subunits with a probable stoichiometry of (alpha(2)epsilon(2))(4)-beta(8)-(gamma(1)delta(1))(8). Requires [4Fe-4S] cluster as cofactor. [Ni-4Fe-4S] cluster serves as cofactor.

It catalyses the reaction CO + 2 oxidized [2Fe-2S]-[ferredoxin] + H2O = 2 reduced [2Fe-2S]-[ferredoxin] + CO2 + 2 H(+). Part of the ACDS complex that catalyzes the reversible cleavage of acetyl-CoA, allowing autotrophic growth from CO(2). The alpha-epsilon subcomponent functions as a carbon monoxide dehydrogenase. The protein is Acetyl-CoA decarbonylase/synthase complex subunit alpha of Methanothermobacter thermautotrophicus (strain ATCC 29096 / DSM 1053 / JCM 10044 / NBRC 100330 / Delta H) (Methanobacterium thermoautotrophicum).